The sequence spans 355 residues: Butyrate kinase 1 (355 aa).

This sequence belongs to the acetokinase family.

It localises to the cytoplasm. It catalyses the reaction butanoate + ATP = butanoyl phosphate + ADP. Its pathway is lipid metabolism; butanoate metabolism. Catalyzes the conversion of butyryl-CoA through butyryl phosphate to butyrate. This is Butyrate kinase 1 (buk1) from Clostridium acetobutylicum (strain ATCC 824 / DSM 792 / JCM 1419 / IAM 19013 / LMG 5710 / NBRC 13948 / NRRL B-527 / VKM B-1787 / 2291 / W).